A 621-amino-acid chain; its full sequence is DEAD-box ATP-dependent RNA helicase 39 (621 aa).

Positions 112–140 match the Q motif motif; the sequence is ENFQELGLSEEVMGALQELNIEVPTEIQC. One can recognise a Helicase ATP-binding domain in the interval 143–330; the sequence is IPAVMERKSV…DEEFQGIEHL (188 aa). 156-163 contacts ATP; the sequence is SHTGSGKT. Positions 270-273 match the DEAD box motif; the sequence is DEAD. A Helicase C-terminal domain is found at 355-505; it reads KLEALLQVLE…LESLTTDNVR (151 aa). The segment at 497-621 is disordered; that stretch reads ESLTTDNVRR…RGKSSSARAS (125 aa). The span at 503–537 shows a compositional bias: basic and acidic residues; that stretch reads NVRRDAARTHITQEKGRSVKQIREVSKQRNSRDKP. The segment covering 555–572 has biased composition (low complexity); sequence KSSSSSFSKPRKASSPPE.

It belongs to the DEAD box helicase family.

The catalysed reaction is ATP + H2O = ADP + phosphate + H(+). The chain is DEAD-box ATP-dependent RNA helicase 39 (RH39) from Arabidopsis thaliana (Mouse-ear cress).